Consider the following 282-residue polypeptide: Biotin synthase (282 aa).

A Radical SAM core domain is found at 1–228; that stretch reads MQEIFLCSIS…NARLMVAGGR (228 aa). Cys17, Cys21, and Cys24 together coordinate [4Fe-4S] cluster. 4 residues coordinate [2Fe-2S] cluster: Cys61, Cys96, Cys154, and Arg221.

The protein belongs to the radical SAM superfamily. Biotin synthase family. In terms of assembly, homodimer. The cofactor is [4Fe-4S] cluster. [2Fe-2S] cluster is required as a cofactor.

It catalyses the reaction (4R,5S)-dethiobiotin + (sulfur carrier)-SH + 2 reduced [2Fe-2S]-[ferredoxin] + 2 S-adenosyl-L-methionine = (sulfur carrier)-H + biotin + 2 5'-deoxyadenosine + 2 L-methionine + 2 oxidized [2Fe-2S]-[ferredoxin]. Its pathway is cofactor biosynthesis; biotin biosynthesis; biotin from 7,8-diaminononanoate: step 2/2. Functionally, catalyzes the conversion of dethiobiotin (DTB) to biotin by the insertion of a sulfur atom into dethiobiotin via a radical-based mechanism. This is Biotin synthase from Helicobacter pylori (strain HPAG1).